Reading from the N-terminus, the 260-residue chain is Hydroxyethylthiazole kinase (260 aa).

Met49 contributes to the substrate binding site. 2 residues coordinate ATP: Arg124 and Thr170. Gly197 serves as a coordination point for substrate.

This sequence belongs to the Thz kinase family. The cofactor is Mg(2+).

It catalyses the reaction 5-(2-hydroxyethyl)-4-methylthiazole + ATP = 4-methyl-5-(2-phosphooxyethyl)-thiazole + ADP + H(+). It functions in the pathway cofactor biosynthesis; thiamine diphosphate biosynthesis; 4-methyl-5-(2-phosphoethyl)-thiazole from 5-(2-hydroxyethyl)-4-methylthiazole: step 1/1. Catalyzes the phosphorylation of the hydroxyl group of 4-methyl-5-beta-hydroxyethylthiazole (THZ). The sequence is that of Hydroxyethylthiazole kinase from Yersinia enterocolitica serotype O:8 / biotype 1B (strain NCTC 13174 / 8081).